We begin with the raw amino-acid sequence, 126 residues long: 13 kDa ribonucleoprotein-associated protein (126 aa).

Belongs to the eukaryotic ribosomal protein eL8 family. As to quaternary structure, component of the U3 snoRNP particle. Binds to the C'/D and B/C motifs in U3 snoRNA. Component of the 25S U4/U6.U5 tri-snRNP particle, a subcomplex of the spliceosome. Binds to the 5' stem-loop of U4 snRNA.

It is found in the nucleus. The protein resides in the nucleolus. In terms of biological role, common component of the spliceosome and rRNA processing machinery. In association with the spliceosomal U4/U6.U5 tri-snRNP particle, required for splicing of pre-mRNA. In association with box C/D snoRNPs, required for processing of pre-ribosomal RNA (rRNA) and site-specific 2'-O-methylation of substrate RNAs. Essential for the accumulation and stability of U4 snRNA, U6 snRNA, and box C/D snoRNAs. This chain is 13 kDa ribonucleoprotein-associated protein (SNU13), found in Kluyveromyces lactis (strain ATCC 8585 / CBS 2359 / DSM 70799 / NBRC 1267 / NRRL Y-1140 / WM37) (Yeast).